Consider the following 250-residue polypeptide: 5'-nucleotidase SurE (250 aa).

Positions 9, 10, 40, and 92 each coordinate a divalent metal cation.

The protein belongs to the SurE nucleotidase family. A divalent metal cation serves as cofactor.

Its subcellular location is the cytoplasm. It catalyses the reaction a ribonucleoside 5'-phosphate + H2O = a ribonucleoside + phosphate. In terms of biological role, nucleotidase that shows phosphatase activity on nucleoside 5'-monophosphates. The polypeptide is 5'-nucleotidase SurE (Idiomarina loihiensis (strain ATCC BAA-735 / DSM 15497 / L2-TR)).